Here is a 484-residue protein sequence, read N- to C-terminus: Calcium-dependent protein kinase 31 (484 aa).

A lipid anchor (N-myristoyl glycine) is attached at G2. A Protein kinase domain is found at 28–290 (YILGDELGQG…AAEVLGHPWM (263 aa)). ATP contacts are provided by residues 34–42 (LGQGQFGIT) and K57. The Proton acceptor role is filled by D156. S196 carries the phosphoserine modification. Residues 295-325 (ASDKPIDGVVLSRLKQFRDMNKLKKVALKVI) are autoinhibitory domain. 4 consecutive EF-hand domains span residues 332-367 (EEIKGLKTLFTNIDTDKSGTITLEELKTGLTRLGSN), 368-403 (LSKTEVEQLMEAADVDGNGTIDIDEFISATMHRYRL), 404-439 (DRDDHVYQAFQHFDKDNDGHITKEELEMAMKEHGVG), and 444-474 (IKQIITEVDTDNDGKINFEEFRTMMRSGSSL). Residues D345, D347, S349, T351, E356, D381, D383, N385, T387, E392, D417, D419, D421, H423, E428, D452, D454, D456, K458, and E463 each coordinate Ca(2+).

The protein belongs to the protein kinase superfamily. Ser/Thr protein kinase family. CDPK subfamily.

The protein localises to the membrane. The enzyme catalyses L-seryl-[protein] + ATP = O-phospho-L-seryl-[protein] + ADP + H(+). It carries out the reaction L-threonyl-[protein] + ATP = O-phospho-L-threonyl-[protein] + ADP + H(+). Activated by calcium. Autophosphorylation may play an important role in the regulation of the kinase activity. In terms of biological role, may play a role in signal transduction pathways that involve calcium as a second messenger. The chain is Calcium-dependent protein kinase 31 (CPK31) from Arabidopsis thaliana (Mouse-ear cress).